The sequence spans 479 residues: Aspartyl/glutamyl-tRNA(Asn/Gln) amidotransferase subunit B (479 aa).

The protein belongs to the GatB/GatE family. GatB subfamily. As to quaternary structure, heterotrimer of A, B and C subunits.

It catalyses the reaction L-glutamyl-tRNA(Gln) + L-glutamine + ATP + H2O = L-glutaminyl-tRNA(Gln) + L-glutamate + ADP + phosphate + H(+). The enzyme catalyses L-aspartyl-tRNA(Asn) + L-glutamine + ATP + H2O = L-asparaginyl-tRNA(Asn) + L-glutamate + ADP + phosphate + 2 H(+). Allows the formation of correctly charged Asn-tRNA(Asn) or Gln-tRNA(Gln) through the transamidation of misacylated Asp-tRNA(Asn) or Glu-tRNA(Gln) in organisms which lack either or both of asparaginyl-tRNA or glutaminyl-tRNA synthetases. The reaction takes place in the presence of glutamine and ATP through an activated phospho-Asp-tRNA(Asn) or phospho-Glu-tRNA(Gln). This Streptococcus pyogenes serotype M1 protein is Aspartyl/glutamyl-tRNA(Asn/Gln) amidotransferase subunit B.